The sequence spans 2348 residues: Transcription factor HIVEP3 (2348 aa).

The interval 1-105 is disordered; the sequence is MDPDQSIKGT…AFMSPGKPEH (105 aa). The span at 27–72 shows a compositional bias: polar residues; that stretch reads IQTSVSSSAPYPGSGTTAPSESATQELLATQPFSGPSQEKTGQQQK. 2 consecutive C2H2-type zinc fingers follow at residues 185–207 and 213–235; these read YICQYCSRPCAKPSVLQKHIRSH and YPCGPCGFSFKTKSNLYKHRKSH. Positions 185 to 235 are ZAS1; the sequence is YICQYCSRPCAKPSVLQKHIRSHTGERPYPCGPCGFSFKTKSNLYKHRKSH. The interval 204–1055 is no DNA binding activity or transactivation activity, but complete prevention of TRAF-dependent NF-Kappa-B activation; associates with TRAF2 and JUN; the sequence is IRSHTGERPY…KGKQESSEEP (852 aa). 3 disordered regions span residues 239-401, 475-532, and 561-628; these read IKAG…SPPN, DSVK…PLLR, and ADPE…TKKG. Positions 257-280 are acidic 1; it reads EMERIPGEEFEEPTEGESTDSEEE. The span at 264–281 shows a compositional bias: acidic residues; sequence EEFEEPTEGESTDSEEET. Residues 298 to 323 are compositionally biased toward low complexity; the sequence is PLLSSSLYSSGSHGSSQERCSLSQSS. Basic and acidic residues predominate over residues 338–352; sequence SSEHPLSHKPEDTHT. Polar residues-rich tracts occupy residues 372 to 401 and 485 to 495; these read TFLSPGSKGSTESGYFSRSESAEQQVSPPN and TRRSSVESPKS. Composition is skewed to low complexity over residues 513 to 527 and 589 to 605; these read QSLLSLQHPPSSTHP and PLGGEYSSEEPGPSSKD. Positions 606–623 are enriched in basic and acidic residues; it reads PTSKPSDEPEPKESDLTK. The CCHC HIVEP-type zinc-finger motif lies at 633–663; sequence GANYECTICGARYKKRDNYEAHKKYYCSELQ. 5 disordered regions span residues 692–1098, 1229–1274, 1386–1427, 1441–1555, and 1654–1694; these read KLGA…PPYT, LPPV…TSAP, EGCS…KADE, STED…EGTD, and EVHL…GEPA. Residues 736–749 show a composition bias toward low complexity; sequence STKSPAEASKSAPS. The segment at 844–865 is acidic 2; that stretch reads EEPDRPDTEPEPPPKEPEKTEE. The span at 845–865 shows a compositional bias: basic and acidic residues; the sequence is EPDRPDTEPEPPPKEPEKTEE. The short motif at 885–891 is the Nuclear localization signal element; the sequence is PKKKRLR. Residues 893–929 are compositionally biased toward low complexity; that stretch reads AEMAQSSGESSFESSVPLSRSPSQESSISLSGSSRSA. Residues 930 to 939 show a composition bias toward basic and acidic residues; that stretch reads SFDREDHGKA. 3 stretches are compositionally biased toward polar residues: residues 975-985, 1062-1073, and 1247-1256; these read SEQSPNVPHSS, TKSSVPQISVGT, and SSSTEYSSDI. The stretch at 1409–1433 forms a coiled coil; the sequence is METQQQKRVKEEEASKADEKLELVS. 3 stretches are compositionally biased toward basic and acidic residues: residues 1416–1427, 1442–1452, and 1518–1527; these read RVKEEEASKADE, TEDRKKTEKPH, and VKKEDPKEQT. The span at 1538–1547 shows a compositional bias: low complexity; the sequence is LPLSDTSPKP. A compositionally biased stretch (basic and acidic residues) spans 1665 to 1694; the sequence is SQKDPARVEKEEKQGKAEEGTPTSKRGEPA. 2 C2H2-type zinc fingers span residues 1720 to 1742 and 1748 to 1772; these read YVCEECGIRCKKPSMLKKHIRTH and YVCKHCHFAFKTKGNLTKHMKSKAH. Residues 1720–1772 are ZAS2; sequence YVCEECGIRCKKPSMLKKHIRTHTDVRPYVCKHCHFAFKTKGNLTKHMKSKAH. The interval 1783–1841 is acidic 3; sequence EELEAEEGTSDDLHQDSEGQEGAEAVEEHQFSDLEDSDSDSDLDEDEEEEEEEEESQDE. 2 disordered regions span residues 1786–1990 and 2009–2038; these read EAEE…HLCG and PAGLERATDTGTPRYSPTRRWSLGQAESPP. A compositionally biased stretch (acidic residues) spans 1815-1840; it reads DLEDSDSDSDLDEDEEEEEEEEESQD. Positions 1871–1902 are enriched in polar residues; that stretch reads PDSTSDEVPQGSSISEATHLTASSCSTPSRGT. Tandem repeats lie at residues 1897–1900, 1927–1930, 1933–1936, 1961–1964, and 2024–2027. Residues 1952–1961 are compositionally biased toward polar residues; sequence KNDSSPQQCS. Positions 2053–2148 are 5 X 4 AA tandem repeats of [ST]-P-X-[RK]; it reads SPSADKSGLG…QLLSRAPCPL (96 aa). Disordered stretches follow at residues 2184 to 2265 and 2284 to 2348; these read SDLT…QGHQ and KASS…PPSI. The segment covering 2203 to 2216 has biased composition (low complexity); that stretch reads SPSASVSPVAKVSK. Positions 2293–2314 are enriched in polar residues; it reads RSSSMDCLAETSTYSPPRSRNL.

In terms of assembly, interacts with TRAF1 and TRAF2 as well as with JUN. Forms a multimeric complex with RUNX2 and E3 ubiquitin ligase WWP1. In terms of processing, phosphorylated on threonine and serine residues. Phosphorylation by cyclin-dependent kinase CDK1 decreases HIVEP3 DNA binding affinity, and by epidermal growth factor receptor kinase increases its DNA binding affinity. In terms of tissue distribution, expressed in macrophages, lymphocytes, brain, thymus, spleen and bone marrow. Expressed in osteoblasts, whole bone and, to a lesser extent, in osteoclasts.

It is found in the cytoplasm. The protein resides in the nucleus. In terms of biological role, plays a role of transcription factor; binds to recognition signal sequences (Rss heptamer) for somatic recombination of immunoglobulin and T-cell receptor gene segments; Also binds to the kappa-B motif of gene such as S100A4, involved in cell progression and differentiation. Kappa-B motif is a gene regulatory element found in promoters and enhancers of genes involved in immunity, inflammation, and growth and that responds to viral antigens, mitogens, and cytokines. Involvement of HIVEP3 in cell growth is strengthened by the fact that its down-regulation promotes cell cycle progression with ultimate formation of multinucleated giant cells. Strongly inhibits TNF-alpha-induced NF-kappa-B activation; Interferes with nuclear factor NF-kappa-B by several mechanisms: as transcription factor, by competing for Kappa-B motif and by repressing transcription in the nucleus; through a non transcriptional process, by inhibiting nuclear translocation of RELA by association with TRAF2, an adapter molecule in the tumor necrosis factor signaling, which blocks the formation of IKK complex. Interaction with TRAF proteins inhibits both NF-Kappa-B-mediated and c-Jun N-terminal kinase/JNK-mediated responses that include apoptosis and pro-inflammatory cytokine gene expression. Positively regulates the expression of IL2 in T-cell. Essential regulator of adult bone formation. This is Transcription factor HIVEP3 (Hivep3) from Mus musculus (Mouse).